The primary structure comprises 221 residues: Cysteine protease inhibitor 8 (221 aa).

A signal peptide spans 1–26; sequence IPSINILSFLLLSSTLSLVAFARSFT. Positions 27–42 are excised as a propeptide; sequence SENPIVLPTTCHDDDN. Residues 29–34 carry the Vacuolar targeting signal motif; that stretch reads NPIVLP. 2 cysteine pairs are disulfide-bonded: C84–C136 and C184–C190.

The protein belongs to the protease inhibitor I3 (leguminous Kunitz-type inhibitor) family.

It localises to the vacuole. Its function is as follows. Inhibitor of cysteine proteases. May protect the plant by inhibiting proteases of invading organisms. The polypeptide is Cysteine protease inhibitor 8 (Solanum tuberosum (Potato)).